The following is a 506-amino-acid chain: MDPVVIFLVLAFPIASVYLLFYHKKRVGGLSSPPGPRGLPFIGNFFQLYKAPCIHEYLWNLSKKYGSLMTLHMGSVPILVVSSPKMAKEVLKTQDLIYCSRPRMTGMRKLSYDGLDVAFSTYSEHWRHVRKLCTLELFTQKRAQLCFRLVHEQEVSRMIVRLSETAAASKDVNAFECFSNLSTSIISRVAFGKRYDEDGIGKERLQRMLSEIDAMLAGIFVSDFFPMFGWIDRLSGMRARLDRTFKEMDMFYEELIDEHLKPNRPESPTEDLIDVMLKNKGSSCLLTMDSIKAILLNVFNGGTGTSATLLVWAMTALMRNQGVMKKAQEDIRRVIGRKGNVDEDDIQNLSYLRAVVKETMRLYPTGPLLIPRETMESSIIGEDKDHMYMIKPKTLVYVSMWAIGRDPEIWKNPMEFVPERFLERPDLNYKGQQFEYIPFGAGRRICAGIHLGVTTVELALANLLYTFDWEPPAGTRFEDIDDETLNGLTLQKKNALYIRPKKYICP.

The helical transmembrane segment at proline 3–histidine 23 threads the bilayer. A substrate specificity region spans residues threonine 365 to isoleucine 370. Cysteine 446 serves as a coordination point for heme.

This sequence belongs to the cytochrome P450 family. It depends on heme as a cofactor.

It is found in the microsome membrane. It catalyses the reaction xanthotoxin + reduced [NADPH--hemoprotein reductase] + O2 = 5-hydroxyxanthotoxin + oxidized [NADPH--hemoprotein reductase] + H2O + 2 H(+). It participates in secondary metabolite biosynthesis. In terms of biological role, involved in the biosynthesis of coumarins and furanocoumarins (FCs), natural products required for defense responses against attacks by predators with potential medical and agroindustrial usages such as anticoagulant, rodenticide and artificial vanilla substitutes. Catalyzes the conversion of xanthotoxin into 5-hydroxyxanthotoxin. In Pastinaca sativa (Wild parsnip), this protein is 5-OH-xanthotoxin synthase.